Consider the following 261-residue polypeptide: Mediator of RNA polymerase II transcription subunit 7 (261 aa).

Disordered stretches follow at residues 1–56 (MADA…PTEL), 99–121 (GITQ…SEPS), and 223–244 (DVDA…VSEE). Over residues 23–46 (FTPDNLKKLDEIKKNASKGEDGKP) the composition is skewed to basic and acidic residues. A compositionally biased stretch (basic and acidic residues) spans 234–244 (NDTKKPNVSEE).

The protein belongs to the Mediator complex subunit 7 family. Component of the Mediator complex.

It is found in the nucleus. Component of the Mediator complex, a coactivator involved in the regulated transcription of nearly all RNA polymerase II-dependent genes. Mediator functions as a bridge to convey information from gene-specific regulatory proteins to the basal RNA polymerase II transcription machinery. Mediator is recruited to promoters by direct interactions with regulatory proteins and serves as a scaffold for the assembly of a functional preinitiation complex with RNA polymerase II and the general transcription factors. This is Mediator of RNA polymerase II transcription subunit 7 (med7) from Aspergillus oryzae (strain ATCC 42149 / RIB 40) (Yellow koji mold).